The primary structure comprises 71 residues: DNA-directed RNA polymerase subunit omega (71 aa).

Belongs to the RNA polymerase subunit omega family. The RNAP catalytic core consists of 2 alpha, 1 beta, 1 beta' and 1 omega subunit. When a sigma factor is associated with the core the holoenzyme is formed, which can initiate transcription.

The catalysed reaction is RNA(n) + a ribonucleoside 5'-triphosphate = RNA(n+1) + diphosphate. Promotes RNA polymerase assembly. Latches the N- and C-terminal regions of the beta' subunit thereby facilitating its interaction with the beta and alpha subunits. This Aromatoleum aromaticum (strain DSM 19018 / LMG 30748 / EbN1) (Azoarcus sp. (strain EbN1)) protein is DNA-directed RNA polymerase subunit omega.